Reading from the N-terminus, the 25-residue chain is Galactose-binding lectin-2 (25 aa).

In terms of assembly, homodimer. In terms of processing, N-glycosylated.

Its function is as follows. D-galactose specific lectin. Binds in decreasing order of affinity: melibiose, N-acetyllactosamine, D-galacturonic acid, D-galactose, methyl-alpha-D-galactoside, D-galactose, methyl-alpha-D-galactopyranoside, methyl-beta-D-galactopyranoside and lactose. Binds also the glycoproteins globotriose, asialofetuin and mucin. Possesses glycan-dependent cytotoxic activity against Burkitt's lymphoma Raji cells and erythroleukemia K562 cells. Has calcium-independent hemagglutinating activity towards human erythrocytes. This is Galactose-binding lectin-2 from Aplysia kurodai (Kuroda's sea hare).